A 104-amino-acid polypeptide reads, in one-letter code: L-rhamnose mutarotase (104 aa).

A substrate-binding site is contributed by Tyr18. Residue His22 is the Proton donor of the active site. Substrate contacts are provided by residues Tyr41 and 76–77 (WW). The disordered stretch occupies residues 85 to 104 (PSNPDNSPISDALDPVFYLD).

The protein belongs to the rhamnose mutarotase family. In terms of assembly, homodimer.

Its subcellular location is the cytoplasm. The enzyme catalyses alpha-L-rhamnose = beta-L-rhamnose. It functions in the pathway carbohydrate metabolism; L-rhamnose metabolism. In terms of biological role, involved in the anomeric conversion of L-rhamnose. In Pectobacterium atrosepticum (strain SCRI 1043 / ATCC BAA-672) (Erwinia carotovora subsp. atroseptica), this protein is L-rhamnose mutarotase.